We begin with the raw amino-acid sequence, 708 residues long: Ribosomal RNA large subunit methyltransferase K/L (708 aa).

One can recognise a THUMP domain in the interval 43 to 154 (QIYRCCLWSR…KENALLGIDM (112 aa)).

The protein belongs to the methyltransferase superfamily. RlmKL family.

The protein localises to the cytoplasm. The catalysed reaction is guanosine(2445) in 23S rRNA + S-adenosyl-L-methionine = N(2)-methylguanosine(2445) in 23S rRNA + S-adenosyl-L-homocysteine + H(+). It carries out the reaction guanosine(2069) in 23S rRNA + S-adenosyl-L-methionine = N(2)-methylguanosine(2069) in 23S rRNA + S-adenosyl-L-homocysteine + H(+). Functionally, specifically methylates the guanine in position 2445 (m2G2445) and the guanine in position 2069 (m7G2069) of 23S rRNA. This is Ribosomal RNA large subunit methyltransferase K/L from Vibrio cholerae serotype O1 (strain ATCC 39541 / Classical Ogawa 395 / O395).